A 131-amino-acid polypeptide reads, in one-letter code: Large ribosomal subunit protein bL19 (131 aa).

A compositionally biased stretch (basic and acidic residues) spans 111–124 (RIAERAERGSEKGK). A disordered region spans residues 111 to 131 (RIAERAERGSEKGKTTPAAAE).

Belongs to the bacterial ribosomal protein bL19 family.

Its function is as follows. This protein is located at the 30S-50S ribosomal subunit interface and may play a role in the structure and function of the aminoacyl-tRNA binding site. This Methylobacterium nodulans (strain LMG 21967 / CNCM I-2342 / ORS 2060) protein is Large ribosomal subunit protein bL19.